Here is a 104-residue protein sequence, read N- to C-terminus: Small ribosomal subunit protein bS18c (104 aa).

A disordered region spans residues 84–104; sequence DKQFERSESTPRTIGLRTRNK.

The protein belongs to the bacterial ribosomal protein bS18 family. In terms of assembly, part of the 30S ribosomal subunit.

Its subcellular location is the plastid. The protein localises to the chloroplast. The protein is Small ribosomal subunit protein bS18c of Cucumis sativus (Cucumber).